Consider the following 125-residue polypeptide: Small ribosomal subunit protein uS12 (125 aa).

D89 is modified (3-methylthioaspartic acid).

It belongs to the universal ribosomal protein uS12 family. In terms of assembly, part of the 30S ribosomal subunit. Contacts proteins S8 and S17. May interact with IF1 in the 30S initiation complex.

In terms of biological role, with S4 and S5 plays an important role in translational accuracy. Its function is as follows. Interacts with and stabilizes bases of the 16S rRNA that are involved in tRNA selection in the A site and with the mRNA backbone. Located at the interface of the 30S and 50S subunits, it traverses the body of the 30S subunit contacting proteins on the other side and probably holding the rRNA structure together. The combined cluster of proteins S8, S12 and S17 appears to hold together the shoulder and platform of the 30S subunit. This chain is Small ribosomal subunit protein uS12, found in Clostridium kluyveri (strain ATCC 8527 / DSM 555 / NBRC 12016 / NCIMB 10680 / K1).